The chain runs to 450 residues: Isoleucine 2-epimerase (450 aa).

Pyridoxal 5'-phosphate contacts are provided by residues 115-116 (GS), Tyr-142, and 250-253 (DEVN). Lys-280 carries the post-translational modification N6-(pyridoxal phosphate)lysine. Thr-309 is a pyridoxal 5'-phosphate binding site.

This sequence belongs to the class-III pyridoxal-phosphate-dependent aminotransferase family. In terms of assembly, homotetramer. Requires pyridoxal 5'-phosphate as cofactor.

It carries out the reaction L-isoleucine = D-allo-isoleucine. In terms of biological role, catalyzes the epimerization of L-isoleucine to D-allo-isoleucine and D-allo-isoleucine to L-isoleucine. Can also catalyze the racemization of many nonpolar amino acids, including leucine and valine. Does not have GABA aminotransferase activity. The protein is Isoleucine 2-epimerase of Lentilactobacillus buchneri (Lactobacillus buchneri).